Reading from the N-terminus, the 305-residue chain is Heme A synthase (305 aa).

The Cytoplasmic portion of the chain corresponds to 1–6 (MKKFLK). A helical membrane pass occupies residues 7 to 27 (VWSVLTIICMTVVVFGGALVT). Topologically, residues 28–63 (KTGSADGCGNSWPLCNGQLVRLTDVTPEKLIEFMHR) are extracellular. An intrachain disulfide couples cysteine 35 to cysteine 42. The active site involves glutamate 59. A heme o-binding site is contributed by histidine 62. Residues 64–84 (MTTGISSIFVIVLAICAWIYM) form a helical membrane-spanning segment. The Cytoplasmic portion of the chain corresponds to 85 to 92 (KNRRETKP). A helical transmembrane segment spans residues 93–113 (LAIIAVLFLIIQALMGMAAVV). Residues 114 to 122 (WGQNPYIMA) are Extracellular-facing. A helical transmembrane segment spans residues 123–143 (LHFGISIICYASIVLLALMIF). Residue histidine 124 coordinates heme o. The Cytoplasmic portion of the chain corresponds to 144–160 (EVDRKFDARNLVMGTKL). A helical membrane pass occupies residues 161–181 (RINIYALTIYTYLAVYTGALV). Residues 182-212 (RHEKASMAVPVWPFENGKFIMPDSVQDYVQY) are Extracellular-facing. Residues 213–233 (FHRVAAFILIVWLLYVTWLVF) form a helical membrane-spanning segment. Histidine 214 is a binding site for heme b. Residues 234–240 (RDYRRYR) lie on the Cytoplasmic side of the membrane. The chain crosses the membrane as a helical span at residues 241–261 (VLTFSMVLSLLFIALQAVTGA). The Extracellular portion of the chain corresponds to 262–271 (LSVYTGVNLY). A helical transmembrane segment spans residues 272–292 (IALAHSLIITMLFALLCYLCL). Residue histidine 276 coordinates heme b. Over 293 to 305 (LASRSKSNRLRIK) the chain is Cytoplasmic.

It belongs to the COX15/CtaA family. Type 1 subfamily. As to quaternary structure, interacts with CtaB. The cofactor is heme b.

Its subcellular location is the cell membrane. It catalyses the reaction Fe(II)-heme o + 2 A + H2O = Fe(II)-heme a + 2 AH2. It functions in the pathway porphyrin-containing compound metabolism; heme A biosynthesis; heme A from heme O: step 1/1. Catalyzes the conversion of heme O to heme A by two successive hydroxylations of the methyl group at C8. The first hydroxylation forms heme I, the second hydroxylation results in an unstable dihydroxymethyl group, which spontaneously dehydrates, resulting in the formyl group of heme A. The protein is Heme A synthase of Listeria welshimeri serovar 6b (strain ATCC 35897 / DSM 20650 / CCUG 15529 / CIP 8149 / NCTC 11857 / SLCC 5334 / V8).